A 602-amino-acid chain; its full sequence is Elongation factor 4 (602 aa).

The tr-type G domain occupies 7-189 (SKIRNFCIIA…AIVRRVPAPQ (183 aa)). Residues 19–24 (DHGKST) and 136–139 (NKVD) each bind GTP.

It belongs to the TRAFAC class translation factor GTPase superfamily. Classic translation factor GTPase family. LepA subfamily.

The protein resides in the cell inner membrane. It catalyses the reaction GTP + H2O = GDP + phosphate + H(+). Functionally, required for accurate and efficient protein synthesis under certain stress conditions. May act as a fidelity factor of the translation reaction, by catalyzing a one-codon backward translocation of tRNAs on improperly translocated ribosomes. Back-translocation proceeds from a post-translocation (POST) complex to a pre-translocation (PRE) complex, thus giving elongation factor G a second chance to translocate the tRNAs correctly. Binds to ribosomes in a GTP-dependent manner. In Prochlorococcus marinus (strain MIT 9312), this protein is Elongation factor 4.